The chain runs to 365 residues: Crh-like protein ARB_03382 (365 aa).

Positions 1 to 25 (MMASRRISVLSSLGLFACLLSPVVA) are cleaved as a signal peptide. Residues 26-302 (QTFTYCNPLE…RWRELPTAAK (277 aa)) lie on the Extracellular side of the membrane. Cysteines 31 and 39 form a disulfide. N-linked (GlcNAc...) asparagine glycans are attached at residues asparagine 48, asparagine 54, asparagine 63, and asparagine 77. Positions 50–243 (TTYLNSSLNP…YEKTPYIMSV (194 aa)) constitute a GH16 domain. Catalysis depends on glutamate 125, which acts as the Nucleophile. The active-site Proton donor is the glutamate 129. Residue glutamate 129 coordinates chitin. N-linked (GlcNAc...) asparagine glycosylation is found at asparagine 147 and asparagine 168. Chitin-binding residues include arginine 209 and tryptophan 213. Residues 303–323 (IAIFASIGGLVILGMAIIAFC) traverse the membrane as a helical segment. At 324 to 365 (CVKQRRAGRREFSMENSKFVEDQNNVMAMRTQWNHKYKPVGS) the chain is on the cytoplasmic side.

The protein belongs to the glycosyl hydrolase 16 family. CRH1 subfamily.

It is found in the membrane. The catalysed reaction is Random endo-hydrolysis of N-acetyl-beta-D-glucosaminide (1-&gt;4)-beta-linkages in chitin and chitodextrins.. In terms of biological role, dual chitinase/transglycosylase that plays a role in cell wall architecture. Chitinase and transglycosylase activities are coupled. Required for the polysaccharide cross-linking at the septa and the cell wall. More specifically, transfers chitin to 1,6-beta-glucan in the cell wall. Plays an important role in fungal pathogenesis. Involved in cell wall assembly and regeneration, filamentation, and adherence to host cells. The polypeptide is Crh-like protein ARB_03382 (Arthroderma benhamiae (strain ATCC MYA-4681 / CBS 112371) (Trichophyton mentagrophytes)).